We begin with the raw amino-acid sequence, 1714 residues long: Bifunctional glutamate/proline--tRNA ligase (1714 aa).

The interval 166–191 (DAKVKRSPQSSKEQTPAKTGERKQEG) is disordered. The segment at 170-754 (KRSPQSSKEQ…ASELDSQISQ (585 aa)) is glutamate--tRNA ligase. The span at 172 to 182 (SPQSSKEQTPA) shows a compositional bias: polar residues. Residues 209–220 (PPEASGYLHIGH) carry the 'HIGH' region motif. Positions 438–442 (VLSKR) match the 'KMSKS' region motif. 3 disordered regions span residues 718-754 (PTSGLKVNAPDAKATKKASSPVSSSGQASELDSQISQ), 791-817 (GKDWKPGQTSASSAPVPAASSSSANDA), and 943-962 (GTTAPAPAAAPVKVKQEKNP). 2 stretches are compositionally biased toward low complexity: residues 734–746 (KASSPVSSSGQAS) and 800–817 (SASSAPVPAASSSSANDA). WHEP-TRS domains are found at residues 744-800 (QASE…GQTS), 816-872 (DAVS…GTVP), 890-946 (SVAQ…GTTA), 969-1025 (TVNT…GTVA), and 1044-1100 (DVGS…DAKS). The interval 755 to 1201 (QGDLVRDLKS…KPAKPVKKEP (447 aa)) is 6 X 57 AA approximate repeats. 2 disordered regions span residues 1093–1119 (DWTPDAKSEPAVVKKEASPVSMASPAK) and 1168–1210 (FPVA…GAVK). Positions 1094–1109 (WTPDAKSEPAVVKKEA) are enriched in basic and acidic residues. Position 1110 is a phosphoserine (Ser1110). The WHEP-TRS 6 domain maps to 1118 to 1174 (AKDELTQEINAQGEKVRAAKGNKAAKEVIDAEVAKLLALKAKYKEVTGTDFPVAGRG). The segment covering 1172–1181 (GRGGGGGGGS) has biased composition (gly residues). The proline--tRNA ligase stretch occupies residues 1207–1714 (GAVKKQTRLG…KFYTLFGRSY (508 aa)). L-proline is bound by residues 1322-1324 (TSE) and Arg1353. Arg1353, Glu1355, Arg1364, Thr1365, Gln1438, and Thr1441 together coordinate ATP. Gln1438 provides a ligand contact to Mg(2+). His1443 contributes to the L-proline binding site. 2 residues coordinate ATP: Thr1476 and Arg1478. Residues Cys1648, Cys1653, and Cys1695 each contribute to the Zn(2+) site.

The protein in the N-terminal section; belongs to the class-I aminoacyl-tRNA synthetase family. Glutamate--tRNA ligase type 2 subfamily. This sequence in the C-terminal section; belongs to the class-II aminoacyl-tRNA synthetase family. As to quaternary structure, component of the multisynthetase complex which is comprised of a bifunctional glutamyl-prolyl-tRNA synthetase, the monospecific isoleucyl, leucyl, glutaminyl, methionyl, lysyl, arginyl, and aspartyl-tRNA synthetases as well as three auxiliary proteins, p18, p48 and p43.

The catalysed reaction is tRNA(Glu) + L-glutamate + ATP = L-glutamyl-tRNA(Glu) + AMP + diphosphate. It catalyses the reaction tRNA(Pro) + L-proline + ATP = L-prolyl-tRNA(Pro) + AMP + diphosphate. Functionally, catalyzes the attachment of both L-glutamate and L-proline to their cognate tRNAs in a two-step reaction where the amino acid is first activated by ATP to form a covalent intermediate with AMP. Subsequently, the activated amino acid is transferred to the acceptor end of the cognate tRNA to form L-glutamyl-tRNA(Glu) and L-prolyl-tRNA(Pro). The polypeptide is Bifunctional glutamate/proline--tRNA ligase (Drosophila melanogaster (Fruit fly)).